The chain runs to 655 residues: Ankyrin repeat and SAM domain-containing protein 3 (655 aa).

The interaction with NEK7 stretch occupies residues 1–421 (MSELSDEASE…PGSEPQTEKS (421 aa)). 2 positions are modified to phosphoserine: S2 and S5. ANK repeat units follow at residues 34 to 64 (DVPLDLHTAASIGQHEVVKECVQRGELDLNK), 68 to 97 (GGWTALMYASYIGHDTIVHLLLEAGVSVNV), 101 to 130 (EGQTPLMLASSCGNESIAYFLLQQGAELEM), 134 to 163 (HGWTALFHCTSAGHQQMVKFLLESGANANV), 168 to 197 (YGYTPLMEAAASGHEIIVQYFLNHGVKVDT), and 201 to 220 (SGATACMLARQFGHMKIVAL). N96 carries the 3-hydroxyasparagine modification. Phosphoserine is present on residues S201, S225, S243, S244, and S245. The interval 314–426 (YRDVTSPINE…QTEKSPYSGP (113 aa)) is disordered. Residue T318 is modified to Phosphothreonine. Phosphoserine is present on residues S319, S366, S369, and S373. Residues 378-395 (KSSVRKQTRSYLKNKSRH) are compositionally biased toward basic residues. An SAM domain is found at 424–487 (SGPQDLATLL…TSAIARWHSS (64 aa)). Residues 500–575 (ADRLETEMQE…AALVLDQLRA (76 aa)) are a coiled coil. S540 is modified (phosphoserine).

In terms of assembly, homooligomer. Interacts (via SAM domain) with ANKS6 (via SAM domain). Interacts with BICC1. Interacts with NPHP1. Interacts with NEK8. Interacts with HIF1AN. Interacts with NEK7; this interaction alters the subcellular distribution of NEK7 by preventing its nuclear translocation. In terms of processing, hydroxylated at Asn-96, most probably by HIF1AN. Phosphorylations at Ser-5, Ser-225, Thr-318, Ser-319, Ser-366 and Ser-369 occur in a NEK7-dependent manner. Post-translationally, polyubiquitinated. In terms of tissue distribution, kidney (at protein level).

Its subcellular location is the cell projection. It is found in the cilium. The protein resides in the cytoplasm. Its function is as follows. May be involved in vasopressin signaling in the kidney. The polypeptide is Ankyrin repeat and SAM domain-containing protein 3 (Anks3) (Mus musculus (Mouse)).